Here is a 169-residue protein sequence, read N- to C-terminus: Peptide deformylase (169 aa).

Fe cation is bound by residues Cys91 and His133. The active site involves Glu134. His137 serves as a coordination point for Fe cation.

Belongs to the polypeptide deformylase family. The cofactor is Fe(2+).

The catalysed reaction is N-terminal N-formyl-L-methionyl-[peptide] + H2O = N-terminal L-methionyl-[peptide] + formate. Removes the formyl group from the N-terminal Met of newly synthesized proteins. Requires at least a dipeptide for an efficient rate of reaction. N-terminal L-methionine is a prerequisite for activity but the enzyme has broad specificity at other positions. In Pectobacterium atrosepticum (strain SCRI 1043 / ATCC BAA-672) (Erwinia carotovora subsp. atroseptica), this protein is Peptide deformylase.